The sequence spans 1070 residues: DNA-directed RNA polymerase subunit beta (1070 aa).

It belongs to the RNA polymerase beta chain family. In plastids the minimal PEP RNA polymerase catalytic core is composed of four subunits: alpha, beta, beta', and beta''. When a (nuclear-encoded) sigma factor is associated with the core the holoenzyme is formed, which can initiate transcription.

It localises to the plastid. It is found in the chloroplast. The enzyme catalyses RNA(n) + a ribonucleoside 5'-triphosphate = RNA(n+1) + diphosphate. In terms of biological role, DNA-dependent RNA polymerase catalyzes the transcription of DNA into RNA using the four ribonucleoside triphosphates as substrates. In Dioscorea elephantipes (Elephant's foot yam), this protein is DNA-directed RNA polymerase subunit beta.